A 242-amino-acid polypeptide reads, in one-letter code: uncharacterized protein (242 aa).

The 68-residue stretch at 2-69 folds into the S4 RNA-binding domain; sequence YRLAKIISNA…KPRLWIYYKP (68 aa). The Nucleophile role is filled by Asp-102.

This sequence belongs to the pseudouridine synthase RsuA family.

The enzyme catalyses a uridine in RNA = a pseudouridine in RNA. This is an uncharacterized protein from Rickettsia typhi (strain ATCC VR-144 / Wilmington).